The primary structure comprises 247 residues: Carboxy-S-adenosyl-L-methionine synthase (247 aa).

S-adenosyl-L-methionine contacts are provided by residues tyrosine 39, 64 to 66 (GCS), 89 to 90 (DN), 117 to 118 (DI), asparagine 132, and arginine 199.

Belongs to the class I-like SAM-binding methyltransferase superfamily. Cx-SAM synthase family. As to quaternary structure, homodimer.

The enzyme catalyses prephenate + S-adenosyl-L-methionine = carboxy-S-adenosyl-L-methionine + 3-phenylpyruvate + H2O. Functionally, catalyzes the conversion of S-adenosyl-L-methionine (SAM) to carboxy-S-adenosyl-L-methionine (Cx-SAM). In Cronobacter sakazakii (strain ATCC BAA-894) (Enterobacter sakazakii), this protein is Carboxy-S-adenosyl-L-methionine synthase.